The following is a 93-amino-acid chain: UPF0298 protein GWCH70_0997 (93 aa).

Belongs to the UPF0298 family.

It localises to the cytoplasm. The chain is UPF0298 protein GWCH70_0997 from Geobacillus sp. (strain WCH70).